The following is a 502-amino-acid chain: UDP-N-acetylglucosamine diphosphorylase 2 (502 aa).

The Substrate binding signature appears at Leu-130–Gly-133. Residue Asn-250 coordinates substrate. The Substrate binding motif lies at Glu-332–Tyr-333. Lys-429 lines the substrate pocket.

Belongs to the UDPGP type 1 family. As to quaternary structure, monomer. Requires Mg(2+) as cofactor. It depends on Mn(2+) as a cofactor. In terms of tissue distribution, expressed in root tips, stipules, lateral root primordia, immature anthers and at the branching points of the flowering shoots.

It localises to the cytoplasm. It carries out the reaction N-acetyl-alpha-D-glucosamine 1-phosphate + UTP + H(+) = UDP-N-acetyl-alpha-D-glucosamine + diphosphate. The catalysed reaction is N-acetyl-alpha-D-galactosamine 1-phosphate + UTP + H(+) = UDP-N-acetyl-alpha-D-galactosamine + diphosphate. The enzyme catalyses alpha-D-glucose 1-phosphate + UTP + H(+) = UDP-alpha-D-glucose + diphosphate. It functions in the pathway nucleotide-sugar biosynthesis; UDP-N-acetyl-alpha-D-glucosamine biosynthesis; UDP-N-acetyl-alpha-D-glucosamine from N-acetyl-alpha-D-glucosamine 1-phosphate: step 1/1. Its function is as follows. Uridylyltransferase involved in the biosynthesis of UDP-glucosamine, an essential precursor for glycoprotein and glycolipid synthesis. Can use UDP-glucosamine, the 4-epimer UDP-galactosamine and UDP-glucose as substrates. Acts redundantly with GLCNAC1PUT1. Required for gametogenesis and embryo development. The protein is UDP-N-acetylglucosamine diphosphorylase 2 (GLCNAC1PUT2) of Arabidopsis thaliana (Mouse-ear cress).